The following is a 256-amino-acid chain: DNA repair protein RecO (256 aa).

This sequence belongs to the RecO family.

Involved in DNA repair and RecF pathway recombination. This is DNA repair protein RecO from Delftia acidovorans (strain DSM 14801 / SPH-1).